Consider the following 369-residue polypeptide: Replication factor C subunit 5 (369 aa).

Positions 21–40 (INKGKDVVGFGPPPQSKATP) are disordered. 79 to 86 (GPPGTGKT) is a binding site for ATP.

This sequence belongs to the activator 1 small subunits family. As to quaternary structure, heterotetramer of subunits RFC2, RFC3, RFC4 and RFC5 that can form a complex with RFC1.

It localises to the nucleus. Its function is as follows. Functions in cell replication and proliferation. May be involved in chromatin assembly and remodeling. Plays a role in the negative control of pathogenesis-related gene expression and systemic acquired resistance (SAR). The protein is Replication factor C subunit 5 (RFC5) of Arabidopsis thaliana (Mouse-ear cress).